Here is a 207-residue protein sequence, read N- to C-terminus: Octanoyltransferase (207 aa).

The BPL/LPL catalytic domain maps to 27 to 203; sequence ADTEDELWVV…HLETQLTPKA (177 aa). Residues 66–73, 133–135, and 146–148 contribute to the substrate site; these read RGGQITYH, SLG, and GLA. Cys-164 functions as the Acyl-thioester intermediate in the catalytic mechanism.

It belongs to the LipB family.

Its subcellular location is the cytoplasm. The enzyme catalyses octanoyl-[ACP] + L-lysyl-[protein] = N(6)-octanoyl-L-lysyl-[protein] + holo-[ACP] + H(+). It functions in the pathway protein modification; protein lipoylation via endogenous pathway; protein N(6)-(lipoyl)lysine from octanoyl-[acyl-carrier-protein]: step 1/2. Its function is as follows. Catalyzes the transfer of endogenously produced octanoic acid from octanoyl-acyl-carrier-protein onto the lipoyl domains of lipoate-dependent enzymes. Lipoyl-ACP can also act as a substrate although octanoyl-ACP is likely to be the physiological substrate. The polypeptide is Octanoyltransferase (Neisseria gonorrhoeae (strain ATCC 700825 / FA 1090)).